A 2410-amino-acid chain; its full sequence is Coprinoferrin synthetase (2410 aa).

Residues 237–646 (LERRAKTNPH…GRIDTQIKVR (410 aa)) are adenylation 1. The Carrier 1 domain occupies 783–860 (RDCTPLEAEV…DIAQLVHVST (78 aa)). An O-(pantetheine 4'-phosphoryl)serine modification is found at Ser820. The tract at residues 891-1260 (DILPPFPVQE…SVEAVVNVHD (370 aa)) is condensation 1. The tract at residues 1298-1317 (ELPLPSRRSPEPVRKVNDDE) is disordered. The segment covering 1305–1314 (RSPEPVRKVN) has biased composition (basic and acidic residues). A Carrier 2 domain is found at 1324–1400 (LLDPVVVADL…RLARVVSNNK (77 aa)). Residue Ser1361 is modified to O-(pantetheine 4'-phosphoryl)serine. A condensation 2 region spans residues 1436 to 1839 (IIPSTALQSG…RIGRTFSVPS (404 aa)). Positions 1858–1932 (VQAGIIHPVL…DLVLQATEIK (75 aa)) constitute a Carrier 3 domain. The residue at position 1893 (Ser1893) is an O-(pantetheine 4'-phosphoryl)serine. Residues 1992-2315 (FQYLFTFKLP…TPIFNVNVNV (324 aa)) are condensation 3.

This sequence belongs to the NRP synthetase family.

Its pathway is siderophore biosynthesis. In terms of biological role, nonribosomal peptide synthase; part of the gene cluster that mediates the biosynthesis of coprinoferrin, an acylated tripeptide hydroxamate siderophore. The biosynthesis of coprinoferrin depends on the hydroxylation of ornithine to N(5)-hydroxyornithine, catalyzed by the monooxygenase cpf2. The second step, the acylation of N(5)-hydroxy-L-ornithine to yield N(5)-hexanoyl-N(5)-hydroxyl-L-ornithine is catalyzed by a not yet identified acyltransferase. Finally, assembly of coprinoferrin is catalyzed by the nonribosomal peptide synthase (NRPS) cpf1 via amide bond formation between three N(5)-hexanoyl-N(5)-hydroxyl-L-ornithine molecules to release the linear trimer. Interestingly, proteins seemingly not directly related to biosynthesis, such as transcription factors, replication factors, and autophagy-related proteins, are conserved among the clusters homologous to the coprinoferrin cluster, suggesting that the cluster may also play developmental and cell biological functions. The chain is Coprinoferrin synthetase from Coprinopsis cinerea (strain Okayama-7 / 130 / ATCC MYA-4618 / FGSC 9003) (Inky cap fungus).